Consider the following 388-residue polypeptide: Succinate--CoA ligase [ADP-forming] subunit beta (388 aa).

The region spanning 9–244 (KQLFQKYGVP…LDEEDPFEIE (236 aa)) is the ATP-grasp domain. ATP is bound by residues Lys46, 53-55 (GRG), Glu99, Leu102, and Glu107. Asn199 and Asp213 together coordinate Mg(2+). Residues Asn265 and 322 to 324 (GIL) each bind substrate.

It belongs to the succinate/malate CoA ligase beta subunit family. In terms of assembly, heterotetramer of two alpha and two beta subunits. Requires Mg(2+) as cofactor.

The catalysed reaction is succinate + ATP + CoA = succinyl-CoA + ADP + phosphate. It catalyses the reaction GTP + succinate + CoA = succinyl-CoA + GDP + phosphate. Its pathway is carbohydrate metabolism; tricarboxylic acid cycle; succinate from succinyl-CoA (ligase route): step 1/1. In terms of biological role, succinyl-CoA synthetase functions in the citric acid cycle (TCA), coupling the hydrolysis of succinyl-CoA to the synthesis of either ATP or GTP and thus represents the only step of substrate-level phosphorylation in the TCA. The beta subunit provides nucleotide specificity of the enzyme and binds the substrate succinate, while the binding sites for coenzyme A and phosphate are found in the alpha subunit. The sequence is that of Succinate--CoA ligase [ADP-forming] subunit beta from Syntrophobacter fumaroxidans (strain DSM 10017 / MPOB).